Reading from the N-terminus, the 840-residue chain is DNA gyrase subunit A (840 aa).

The region spanning 51–516 (LPDVRDGFKP…VSSHIDDEDL (466 aa)) is the Topo IIA-type catalytic domain. The active-site O-(5'-phospho-DNA)-tyrosine intermediate is the Tyr139. The short motif at 543-549 (QRRGGVG) is the GyrA-box element.

Belongs to the type II topoisomerase GyrA/ParC subunit family. As to quaternary structure, heterotetramer, composed of two GyrA and two GyrB chains. In the heterotetramer, GyrA contains the active site tyrosine that forms a transient covalent intermediate with DNA, while GyrB binds cofactors and catalyzes ATP hydrolysis.

It localises to the cytoplasm. The catalysed reaction is ATP-dependent breakage, passage and rejoining of double-stranded DNA.. Its function is as follows. A type II topoisomerase that negatively supercoils closed circular double-stranded (ds) DNA in an ATP-dependent manner to modulate DNA topology and maintain chromosomes in an underwound state. Negative supercoiling favors strand separation, and DNA replication, transcription, recombination and repair, all of which involve strand separation. Also able to catalyze the interconversion of other topological isomers of dsDNA rings, including catenanes and knotted rings. Type II topoisomerases break and join 2 DNA strands simultaneously in an ATP-dependent manner. The chain is DNA gyrase subunit A from Ureaplasma parvum serovar 3 (strain ATCC 700970).